The sequence spans 437 residues: Adenylosuccinate synthetase (437 aa).

Residues 12 to 18 (GDEGKGK) and 40 to 42 (GHT) contribute to the GTP site. Residue Asp-13 is the Proton acceptor of the active site. Asp-13 and Gly-40 together coordinate Mg(2+). IMP contacts are provided by residues 13-16 (DEGK), 38-41 (NAGH), Thr-128, Arg-142, Gln-223, Thr-238, and Arg-302. His-41 acts as the Proton donor in catalysis. Substrate is bound at residue 298–304 (TTTGRRR). Residues Arg-304, 330-332 (KLD), and 412-414 (SLG) each bind GTP.

It belongs to the adenylosuccinate synthetase family. In terms of assembly, homodimer. It depends on Mg(2+) as a cofactor.

Its subcellular location is the cytoplasm. The enzyme catalyses IMP + L-aspartate + GTP = N(6)-(1,2-dicarboxyethyl)-AMP + GDP + phosphate + 2 H(+). It functions in the pathway purine metabolism; AMP biosynthesis via de novo pathway; AMP from IMP: step 1/2. Functionally, plays an important role in the de novo pathway of purine nucleotide biosynthesis. Catalyzes the first committed step in the biosynthesis of AMP from IMP. This chain is Adenylosuccinate synthetase, found in Synechococcus sp. (strain CC9311).